A 548-amino-acid polypeptide reads, in one-letter code: mRNA cleavage and polyadenylation factor CLP1 (548 aa).

ATP is bound by residues E19, K60, and 123 to 128; that span reads SSGKTT. A compositionally biased stretch (basic and acidic residues) spans 437–478; sequence ESEVKEEVKEEKNEKDGEIKQDGEGEKKGEGKGEGEGEGEGK. Positions 437-500 are disordered; the sequence is ESEVKEEVKE…DEEEVPFREE (64 aa). Residues 479–494 are compositionally biased toward acidic residues; that stretch reads DGEEEGEAEGEDDEEE.

Belongs to the Clp1 family. Clp1 subfamily. Component of a pre-mRNA cleavage factor complex. Interacts directly with PCF11.

It is found in the nucleus. Required for endonucleolytic cleavage during polyadenylation-dependent pre-mRNA 3'-end formation. The protein is mRNA cleavage and polyadenylation factor CLP1 of Cryptococcus neoformans var. neoformans serotype D (strain JEC21 / ATCC MYA-565) (Filobasidiella neoformans).